The chain runs to 268 residues: Tryptophan synthase alpha chain (268 aa).

Catalysis depends on proton acceptor residues E49 and D60.

It belongs to the TrpA family. Tetramer of two alpha and two beta chains.

It catalyses the reaction (1S,2R)-1-C-(indol-3-yl)glycerol 3-phosphate + L-serine = D-glyceraldehyde 3-phosphate + L-tryptophan + H2O. It participates in amino-acid biosynthesis; L-tryptophan biosynthesis; L-tryptophan from chorismate: step 5/5. Its function is as follows. The alpha subunit is responsible for the aldol cleavage of indoleglycerol phosphate to indole and glyceraldehyde 3-phosphate. The polypeptide is Tryptophan synthase alpha chain (Xylella fastidiosa (strain 9a5c)).